The primary structure comprises 495 residues: Trimethylamine methyltransferase MttB (495 aa).

Position 334 (Pyl334) is a non-standard amino acid, pyrrolysine.

The protein belongs to the trimethylamine methyltransferase family.

It catalyses the reaction Co(I)-[trimethylamine-specific corrinoid protein] + trimethylamine + H(+) = methyl-Co(III)-[trimethylamine-specific corrinoid protein] + dimethylamine. It participates in one-carbon metabolism; methanogenesis from trimethylamine. Catalyzes the transfer of a methyl group from trimethylamine to the corrinoid cofactor of MttC. This Methanosarcina barkeri (strain Fusaro / DSM 804) protein is Trimethylamine methyltransferase MttB (mttB).